The sequence spans 457 residues: Argininosuccinate lyase (457 aa).

This sequence belongs to the lyase 1 family. Argininosuccinate lyase subfamily.

The protein localises to the cytoplasm. The catalysed reaction is 2-(N(omega)-L-arginino)succinate = fumarate + L-arginine. It functions in the pathway amino-acid biosynthesis; L-arginine biosynthesis; L-arginine from L-ornithine and carbamoyl phosphate: step 3/3. In Shigella boydii serotype 18 (strain CDC 3083-94 / BS512), this protein is Argininosuccinate lyase.